The following is a 146-amino-acid chain: Microsomal glutathione S-transferase 2 (146 aa).

3 helical membrane-spanning segments follow: residues 6–26 (ILLA…AMQV), 59–79 (FYPI…QVFA), and 111–131 (SLGV…NSFL).

The protein belongs to the MAPEG family. In terms of assembly, homotrimer.

Its subcellular location is the endoplasmic reticulum membrane. It is found in the microsome membrane. It catalyses the reaction RX + glutathione = an S-substituted glutathione + a halide anion + H(+). The catalysed reaction is 1-chloro-2,4-dinitrobenzene + glutathione = 2,4-dinitrophenyl-S-glutathione + chloride + H(+). It carries out the reaction leukotriene C4 = leukotriene A4 + glutathione. The enzyme catalyses (5S)-hydroperoxy-(6E,8Z,11Z,14Z)-eicosatetraenoate + 2 glutathione = (5S)-hydroxy-(6E,8Z,11Z,14Z)-eicosatetraenoate + glutathione disulfide + H2O. Each monomer binds on GSH molecule but only one subunit is catalytically active. Functionally, catalyzes several different glutathione-dependent reactions. Catalyzes the glutathione-dependent reduction of lipid hydroperoxides, such as 5-HPETE. Has glutathione transferase activity, toward xenobiotic electrophiles, such as 1-chloro-2, 4-dinitrobenzene (CDNB). Also catalyzes the conjugation of leukotriene A4 with reduced glutathione to form leukotriene C4 (LTC4). Involved in oxidative DNA damage induced by ER stress and anticancer agents by activating LTC4 biosynthetic machinery in nonimmune cells. The protein is Microsomal glutathione S-transferase 2 (MGST2) of Bos taurus (Bovine).